The primary structure comprises 245 residues: Adapter protein MecA (245 aa).

The protein belongs to the MecA family. In terms of assembly, homodimer.

Functionally, enables the recognition and targeting of unfolded and aggregated proteins to the ClpC protease or to other proteins involved in proteolysis. This Streptococcus pneumoniae serotype 19F (strain G54) protein is Adapter protein MecA.